The primary structure comprises 382 residues: Galactokinase (382 aa).

E34–D37 provides a ligand contact to substrate. G124–S130 serves as a coordination point for ATP. S130 and E162 together coordinate Mg(2+). Catalysis depends on D174, which acts as the Proton acceptor. Y223 is a substrate binding site.

Belongs to the GHMP kinase family. GalK subfamily.

Its subcellular location is the cytoplasm. It catalyses the reaction alpha-D-galactose + ATP = alpha-D-galactose 1-phosphate + ADP + H(+). The protein operates within carbohydrate metabolism; galactose metabolism. Functionally, catalyzes the transfer of the gamma-phosphate of ATP to D-galactose to form alpha-D-galactose-1-phosphate (Gal-1-P). This is Galactokinase from Shigella boydii serotype 4 (strain Sb227).